Consider the following 493-residue polypeptide: Cobyric acid synthase (493 aa).

One can recognise a GATase cobBQ-type domain in the interval 255–441; sequence ELEIAVLRLP…LHGLLENGRW (187 aa). Cys336 functions as the Nucleophile in the catalytic mechanism. The active site involves His433.

Belongs to the CobB/CobQ family. CobQ subfamily.

The protein operates within cofactor biosynthesis; adenosylcobalamin biosynthesis. Catalyzes amidations at positions B, D, E, and G on adenosylcobyrinic A,C-diamide. NH(2) groups are provided by glutamine, and one molecule of ATP is hydrogenolyzed for each amidation. In Synechococcus sp. (strain RCC307), this protein is Cobyric acid synthase.